The primary structure comprises 159 residues: Ribosome maturation factor RimP (159 aa).

The protein belongs to the RimP family.

It is found in the cytoplasm. In terms of biological role, required for maturation of 30S ribosomal subunits. The sequence is that of Ribosome maturation factor RimP from Geobacter sulfurreducens (strain ATCC 51573 / DSM 12127 / PCA).